The chain runs to 1575 residues: Laminin subunit gamma-3 (1575 aa).

The first 19 residues, 1–19, serve as a signal peptide directing secretion; it reads MAAAALLLGLALLAPRAAG. In terms of domain architecture, Laminin N-terminal spans 31-270; that stretch reads RPQRCLPVFE…AVSDFSVGGR (240 aa). Asn87 and Asn119 each carry an N-linked (GlcNAc...) asparagine glycan. 16 disulfide bridges follow: Cys271–Cys280, Cys273–Cys290, Cys292–Cys301, Cys304–Cys324, Cys327–Cys336, Cys329–Cys352, Cys355–Cys364, Cys367–Cys380, Cys383–Cys395, Cys385–Cys401, Cys403–Cys412, Cys415–Cys427, Cys430–Cys441, Cys432–Cys448, Cys450–Cys459, and Cys462–Cys477. Laminin EGF-like domains lie at 271 to 326, 327 to 382, 383 to 429, and 430 to 479; these read CKCN…ECLP, CNCS…PCQP, CDCQ…GCRP, and CTCN…GCSS. Asn295 is a glycosylation site (N-linked (GlcNAc...) asparagine). N-linked (GlcNAc...) asparagine glycosylation occurs at Asn328. The 10-residue stretch at 480–489 folds into the Laminin EGF-like 5; first part domain; that stretch reads CFCYGHSKVC. One can recognise a Laminin IV type A domain in the interval 499–672; sequence HILSDFHQGA…LSPPASWVEI (174 aa). The N-linked (GlcNAc...) asparagine glycan is linked to Asn631. One can recognise a Laminin EGF-like 5; second part domain in the interval 673–706; it reads CSCPTGYTGQFCESCAPGYKREMPQGGPYASCVP. 24 disulfide bridges follow: Cys707-Cys715, Cys709-Cys722, Cys724-Cys733, Cys736-Cys752, Cys755-Cys763, Cys757-Cys774, Cys777-Cys786, Cys789-Cys807, Cys810-Cys824, Cys812-Cys831, Cys834-Cys843, Cys846-Cys863, Cys866-Cys880, Cys868-Cys887, Cys889-Cys898, Cys901-Cys914, Cys917-Cys929, Cys919-Cys936, Cys938-Cys947, Cys950-Cys962, Cys965-Cys977, Cys967-Cys983, Cys985-Cys994, and Cys997-Cys1010. Laminin EGF-like domains are found at residues 707-754, 755-809, 810-865, 866-916, 917-964, and 965-1013; these read CTCN…DCQP, CPCP…PCHQ, CQCS…KCMP, CSCH…GCRS, CKCH…GCRA, and CRCS…CQQC. Asn837 carries an N-linked (GlcNAc...) asparagine glycan. The N-linked (GlcNAc...) asparagine glycan is linked to Asn980. A domain II and I region spans residues 1014–1575; that stretch reads PSCYALVKEE…SLPENCASWQ (562 aa). Positions 1059–1061 match the Cell attachment site motif; the sequence is RGD. Positions 1073 to 1134 form a coiled coil; sequence REAFLEQMMS…SEEEILHAAA (62 aa). An N-linked (GlcNAc...) asparagine glycan is attached at Asn1185. The stretch at 1201 to 1228 forms a coiled coil; the sequence is LETQRDLEDRYQEVQAAQKALRTAVAEV. Residues 1378-1399 form a disordered region; it reads KQAERMLGNAAPLSSSAKKKGR. Coiled-coil stretches lie at residues 1410–1492 and 1523–1567; these read KLAK…LARL and GSLQ…LHSL.

Laminin is a complex glycoprotein, consisting of three different polypeptide chains (alpha, beta, gamma), which are bound to each other by disulfide bonds into a cross-shaped molecule comprising one long and three short arms with globules at each end. Gamma-3 is a subunit of laminin-12 (laminin-213), laminin-14 (laminin-423) and laminin-15 (laminin-523). In terms of tissue distribution, broadly expressed in: skin, heart, lung, and the reproductive tracts.

The protein localises to the secreted. Its subcellular location is the extracellular space. It localises to the extracellular matrix. The protein resides in the basement membrane. Its function is as follows. Binding to cells via a high affinity receptor, laminin is thought to mediate the attachment, migration and organization of cells into tissues during embryonic development by interacting with other extracellular matrix components. The protein is Laminin subunit gamma-3 (LAMC3) of Homo sapiens (Human).